Consider the following 472-residue polypeptide: tRNA-2-methylthio-N(6)-dimethylallyladenosine synthase (472 aa).

Residues 1–24 (MTGTPDVFPPATPGGTPLVALPAG) are disordered. An MTTase N-terminal domain is found at 33-150 (GKLYIKTHGC…LPELIRARRE (118 aa)). The [4Fe-4S] cluster site is built by Cys-42, Cys-79, Cys-113, Cys-187, Cys-191, and Cys-194. Residues 173–407 (RADGASAFVS…RINAHAAGIS (235 aa)) enclose the Radical SAM core domain. The region spanning 408-471 (EKMVGTVQTV…TNSLRARVVA (64 aa)) is the TRAM domain.

The protein belongs to the methylthiotransferase family. MiaB subfamily. In terms of assembly, monomer. The cofactor is [4Fe-4S] cluster.

The protein resides in the cytoplasm. It catalyses the reaction N(6)-dimethylallyladenosine(37) in tRNA + (sulfur carrier)-SH + AH2 + 2 S-adenosyl-L-methionine = 2-methylsulfanyl-N(6)-dimethylallyladenosine(37) in tRNA + (sulfur carrier)-H + 5'-deoxyadenosine + L-methionine + A + S-adenosyl-L-homocysteine + 2 H(+). Catalyzes the methylthiolation of N6-(dimethylallyl)adenosine (i(6)A), leading to the formation of 2-methylthio-N6-(dimethylallyl)adenosine (ms(2)i(6)A) at position 37 in tRNAs that read codons beginning with uridine. The polypeptide is tRNA-2-methylthio-N(6)-dimethylallyladenosine synthase (Stenotrophomonas maltophilia (strain R551-3)).